The chain runs to 165 residues: Nascent polypeptide-associated complex subunit beta (165 aa).

The NAC-A/B domain maps to 33-97 (TTDDKRLQST…PQTKKLQDIL (65 aa)). A disordered region spans residues 120-165 (QKQAPGAGDVPATIQEEDDDDDVPDLVVGETFETPATEEAPKAAAS). The span at 134 to 143 (QEEDDDDDVP) shows a compositional bias: acidic residues. Residues 144–165 (DLVVGETFETPATEEAPKAAAS) show a composition bias toward low complexity.

This sequence belongs to the NAC-beta family. As to quaternary structure, part of the nascent polypeptide-associated complex (NAC).

The chain is Nascent polypeptide-associated complex subunit beta from Arabidopsis thaliana (Mouse-ear cress).